A 474-amino-acid chain; its full sequence is Ribulose bisphosphate carboxylase/oxygenase activase, chloroplastic (474 aa).

The N-terminal 58 residues, 1–58, are a transit peptide targeting the chloroplast; sequence MAAAVSTVGAINRAPLSLNGSGSGAVSAPASTFLGKKVVTVSRFAQSNKKSNGSFKVL. Thr78 bears the Phosphothreonine; by CK2 mark. 165-172 contributes to the ATP binding site; sequence GGKGQGKS. Residue Thr283 is modified to Phosphothreonine.

It belongs to the RuBisCO activase family. In terms of processing, phosphorylated at Thr-78 by CK2.

The protein localises to the plastid. Its subcellular location is the chloroplast stroma. The protein resides in the chloroplast. It localises to the plastoglobule. Its function is as follows. Activation of RuBisCO (ribulose-1,5-bisphosphate carboxylase/oxygenase; EC 4.1.1.39) involves the ATP-dependent carboxylation of the epsilon-amino group of lysine leading to a carbamate structure. The protein is Ribulose bisphosphate carboxylase/oxygenase activase, chloroplastic (RCA) of Arabidopsis thaliana (Mouse-ear cress).